A 560-amino-acid polypeptide reads, in one-letter code: Putative transport protein ESA_02488 (560 aa).

The next 5 helical transmembrane spans lie at leucine 8–glycine 28, leucine 32–glutamine 52, phenylalanine 66–phenylalanine 86, asparagine 91–glycine 111, and histidine 158–alanine 178. 2 RCK C-terminal domains span residues arginine 200 to asparagine 288 and valine 292 to phenylalanine 373. Transmembrane regions (helical) follow at residues leucine 383–phenylalanine 403, phenylalanine 406–leucine 426, phenylalanine 447–glycine 467, methionine 475–alanine 495, and tyrosine 539–glycine 559.

Belongs to the AAE transporter (TC 2.A.81) family. YbjL subfamily.

The protein resides in the cell membrane. The chain is Putative transport protein ESA_02488 from Cronobacter sakazakii (strain ATCC BAA-894) (Enterobacter sakazakii).